Here is a 130-residue protein sequence, read N- to C-terminus: Histone H2A type 2-A (130 aa).

The interval 1–22 (MSGRGKQGGKARAKAKSRSSRA) is disordered. At Ser-2 the chain carries N-acetylserine. Ser-2 carries the phosphoserine; by RPS6KA5 modification. Arg-4 carries the citrulline; alternate modification. Arg-4 is subject to Symmetric dimethylarginine; by PRMT5; alternate. N6-(2-hydroxyisobutyryl)lysine; alternate is present on residues Lys-6 and Lys-10. An N6-(beta-hydroxybutyryl)lysine; alternate modification is found at Lys-6. Lys-6 bears the N6-acetyllysine; alternate mark. Over residues 7 to 19 (QGGKARAKAKSRS) the composition is skewed to basic residues. Lys-10 carries the post-translational modification N6-lactoyllysine; alternate. Lys-10 carries the N6-succinyllysine; alternate modification. Glycyl lysine isopeptide (Lys-Gly) (interchain with G-Cter in ubiquitin) cross-links involve residues Lys-14 and Lys-16. Lys-37 carries the post-translational modification N6-(2-hydroxyisobutyryl)lysine; alternate. Lys-37 is subject to N6-(beta-hydroxybutyryl)lysine; alternate. Residue Lys-37 is modified to N6-crotonyllysine; alternate. 2 positions are modified to N6-(2-hydroxyisobutyryl)lysine: Lys-75 and Lys-76. Residue Lys-96 is modified to N6-(2-hydroxyisobutyryl)lysine; alternate. Position 96 is an N6-succinyllysine; alternate (Lys-96). Lys-96 carries the post-translational modification N6-glutaryllysine; alternate. Position 100 is an N6-glutaryllysine (Lys-100). Position 105 is an N5-methylglutamine (Gln-105). Lys-119 is modified (N6-(2-hydroxyisobutyryl)lysine; alternate). Residues Lys-119 and Lys-120 each carry the N6-crotonyllysine; alternate modification. Lys-119 and Lys-120 each carry N6-glutaryllysine; alternate. At Lys-120 the chain carries N6-(beta-hydroxybutyryl)lysine; alternate. Lys-120 is covalently cross-linked (Glycyl lysine isopeptide (Lys-Gly) (interchain with G-Cter in ubiquitin); alternate). Thr-121 carries the phosphothreonine; by DCAF1 modification. At Lys-126 the chain carries N6-(beta-hydroxybutyryl)lysine; alternate. Lys-126 carries the N6-crotonyllysine; alternate modification. Residue Lys-126 is modified to N6-glutaryllysine; alternate.

It belongs to the histone H2A family. As to quaternary structure, the nucleosome is a histone octamer containing two molecules each of H2A, H2B, H3 and H4 assembled in one H3-H4 heterotetramer and two H2A-H2B heterodimers. The octamer wraps approximately 147 bp of DNA. Deiminated on Arg-4 in granulocytes upon calcium entry. Post-translationally, monoubiquitination of Lys-120 (H2AK119Ub) by RING1, TRIM37 and RNF2/RING2 complex gives a specific tag for epigenetic transcriptional repression and participates in X chromosome inactivation of female mammals. It is involved in the initiation of both imprinted and random X inactivation. Ubiquitinated H2A is enriched in inactive X chromosome chromatin. Ubiquitination of H2A functions downstream of methylation of 'Lys-27' of histone H3 (H3K27me). H2AK119Ub by RNF2/RING2 can also be induced by ultraviolet and may be involved in DNA repair. Following DNA double-strand breaks (DSBs), it is ubiquitinated through 'Lys-63' linkage of ubiquitin moieties by the E2 ligase UBE2N and the E3 ligases RNF8 and RNF168, leading to the recruitment of repair proteins to sites of DNA damage. Ubiquitination at Lys-14 and Lys-16 (H2AK13Ub and H2AK15Ub, respectively) in response to DNA damage is initiated by RNF168 that mediates monoubiquitination at these 2 sites, and 'Lys-63'-linked ubiquitin are then conjugated to monoubiquitin; RNF8 is able to extend 'Lys-63'-linked ubiquitin chains in vitro. H2AK119Ub and ionizing radiation-induced 'Lys-63'-linked ubiquitination (H2AK13Ub and H2AK15Ub) are distinct events. In terms of processing, phosphorylation on Ser-2 (H2AS1ph) is enhanced during mitosis. Phosphorylation on Ser-2 by RPS6KA5/MSK1 directly represses transcription. Acetylation of H3 inhibits Ser-2 phosphorylation by RPS6KA5/MSK1. Phosphorylation at Thr-121 (H2AT120ph) by DCAF1 is present in the regulatory region of many tumor suppresor genes and down-regulates their transcription. Symmetric dimethylation on Arg-4 by the PRDM1/PRMT5 complex may play a crucial role in the germ-cell lineage. Post-translationally, glutamine methylation at Gln-105 (H2AQ104me) by FBL is specifically dedicated to polymerase I. It is present at 35S ribosomal DNA locus and impairs binding of the FACT complex. In terms of processing, crotonylation (Kcr) is specifically present in male germ cells and marks testis-specific genes in post-meiotic cells, including X-linked genes that escape sex chromosome inactivation in haploid cells. Crotonylation marks active promoters and enhancers and confers resistance to transcriptional repressors. It is also associated with post-meiotically activated genes on autosomes. Hydroxybutyrylation of histones is induced by starvation. Post-translationally, lactylated in macrophages by EP300/P300 by using lactoyl-CoA directly derived from endogenous or exogenous lactate, leading to stimulates gene transcription.

The protein resides in the nucleus. Its subcellular location is the chromosome. Core component of nucleosome. Nucleosomes wrap and compact DNA into chromatin, limiting DNA accessibility to the cellular machineries which require DNA as a template. Histones thereby play a central role in transcription regulation, DNA repair, DNA replication and chromosomal stability. DNA accessibility is regulated via a complex set of post-translational modifications of histones, also called histone code, and nucleosome remodeling. In Mus musculus (Mouse), this protein is Histone H2A type 2-A (Hist2h2aa1).